We begin with the raw amino-acid sequence, 322 residues long: uncharacterized protein (322 aa).

The next 4 membrane-spanning stretches (helical) occupy residues 24–44 (LLHLQNFASAGIITILCIQIT), 68–88 (LFFELIGYHPFVIGALLLIFI), 100–120 (IVTSSVIILHLYMSGGITPTF), and 125–145 (VQLITVGIGVALLMNLYMPSL).

The protein localises to the cell membrane. This is an uncharacterized protein from Bacillus subtilis (strain 168).